Consider the following 360-residue polypeptide: DNA ADP-ribosyl glycohydrolase (360 aa).

A Macro domain is found at 1-155 (MLRFVRGNLL…VYEPVENPKA (155 aa)). ADP-D-ribose contacts are provided by residues 8 to 9 (NL), 20 to 22 (TVN), 31 to 34 (VALQ), and Thr79. Catalysis depends on Lys80, which acts as the Nucleophile. 117 to 121 (GAGNG) provides a ligand contact to ADP-D-ribose. Residues 167–338 (LTPARAALLK…VALDALLKRG (172 aa)) are interaction with DarT.

It belongs to the DarG ADP-ribosyl glycohydrolase family. As to quaternary structure, interacts (via C-terminus) with cognate toxin DarT; this heterodimeric complex neutralizes the toxic effect of DarT by preventing ssDNA binding to DarT and consequently inactivating the toxin by direct protein-protein interactions.

It catalyses the reaction an N-(ADP-alpha-D-ribosyl)-thymidine in DNA + H2O = a thymidine in DNA + ADP-D-ribose. Functionally, antitoxin component of the hybrid type II/IV toxin-antitoxin (TA) system DarTG, which plays a crucial role in controlling bacterial growth and bacteriophage infection. De-ADP-ribosylates DNA modified on thymidine by its cognate toxin DarT, which neutralizes the activity of cognate toxin DarT. Upon expression in E.coli neutralizes the effect of cognate toxin DarT. Upon expression in M.tuberculosis neutralizes the toxic effects of endogenous DarT. The polypeptide is DNA ADP-ribosyl glycohydrolase (Thermus aquaticus (strain ATCC BAA-2747 / Y51MC23)).